The sequence spans 214 residues: NADH-quinone oxidoreductase subunit C (214 aa).

This sequence belongs to the complex I 30 kDa subunit family. NDH-1 is composed of 14 different subunits. Subunits NuoB, C, D, E, F, and G constitute the peripheral sector of the complex.

It localises to the cell inner membrane. The enzyme catalyses a quinone + NADH + 5 H(+)(in) = a quinol + NAD(+) + 4 H(+)(out). NDH-1 shuttles electrons from NADH, via FMN and iron-sulfur (Fe-S) centers, to quinones in the respiratory chain. The immediate electron acceptor for the enzyme in this species is believed to be ubiquinone. Couples the redox reaction to proton translocation (for every two electrons transferred, four hydrogen ions are translocated across the cytoplasmic membrane), and thus conserves the redox energy in a proton gradient. The protein is NADH-quinone oxidoreductase subunit C of Francisella tularensis subsp. mediasiatica (strain FSC147).